A 145-amino-acid polypeptide reads, in one-letter code: uncharacterized protein (145 aa).

The CBM3 domain maps to 1 to 145 (LQYRAADTNA…NGQIVWGTAP (145 aa)).

This is an uncharacterized protein from Paenibacillus lautus (Bacillus lautus).